Consider the following 274-residue polypeptide: Large ribosomal subunit protein uL2 (274 aa).

Residues 223–274 form a disordered region; it reads VAMNPVDHPHGGGEGRTSGGRHPVSPWGMPTKGFKTRKNKSTDKYIVRRRNK.

The protein belongs to the universal ribosomal protein uL2 family. Part of the 50S ribosomal subunit. Forms a bridge to the 30S subunit in the 70S ribosome.

Functionally, one of the primary rRNA binding proteins. Required for association of the 30S and 50S subunits to form the 70S ribosome, for tRNA binding and peptide bond formation. It has been suggested to have peptidyltransferase activity; this is somewhat controversial. Makes several contacts with the 16S rRNA in the 70S ribosome. In Aliivibrio fischeri (strain ATCC 700601 / ES114) (Vibrio fischeri), this protein is Large ribosomal subunit protein uL2.